A 1231-amino-acid chain; its full sequence is Cohesin subunit SA-2 (1231 aa).

N-acetylmethionine is present on methionine 1. Residues 1–75 (MIAAPEIPTD…GPNRMNGHHQ (75 aa)) are disordered. Residues 36–48 (KQGKGKTCKKGKK) show a composition bias toward basic residues. Residues 293–378 (FVHRYRDAIA…SRFKDRIVSM (86 aa)) form the SCD domain. Residue lysine 607 is modified to N6-acetyllysine. A phosphoserine mark is found at serine 1058, serine 1061, serine 1064, and serine 1065. A disordered region spans residues 1064-1083 (SSRGSTVRSKKSKPSTGKRK). The segment covering 1071–1082 (RSKKSKPSTGKR) has biased composition (basic residues). At threonine 1112 the chain carries Phosphothreonine. Serine 1177 and serine 1178 each carry phosphoserine.

It belongs to the SCC3 family. In terms of assembly, interacts directly with RAD21 in cohesin complex. Cohesin complexes are composed of a heterodimer between a SMC1 protein (SMC1A or SMC1B) and SMC3, which are attached via their hinge domain, and RAD21 which link them at their heads, and one STAG protein (STAG1, STAG2 or STAG3). In cohesin complexes, STAG2 is mutually exclusive with STAG1 and STAG3. In terms of processing, phosphorylated by PLK1. The large dissociation of cohesin from chromosome arms during prophase is partly due to its phosphorylation.

It localises to the nucleus. The protein localises to the chromosome. It is found in the centromere. Component of cohesin complex, a complex required for the cohesion of sister chromatids after DNA replication. The cohesin complex apparently forms a large proteinaceous ring within which sister chromatids can be trapped. At anaphase, the complex is cleaved and dissociates from chromatin, allowing sister chromatids to segregate. The cohesin complex may also play a role in spindle pole assembly during mitosis. The sequence is that of Cohesin subunit SA-2 (STAG2) from Homo sapiens (Human).